The chain runs to 630 residues: Pro-interleukin-16 (630 aa).

Disordered regions lie at residues 30–268 (ENPG…FPLT) and 316–343 (PKEG…ASDT). The span at 129–143 (IRASSSSSIKQRISS) shows a compositional bias: low complexity. S220 carries the phosphoserine modification. Residues 321-343 (SPTSSSNEDSAANGSAETSASDT) are compositionally biased toward polar residues. The segment at 404 to 500 (KQLDSIHVTI…IVTRKLTAES (97 aa)) is interaction with PPP1R12A, PPP1R12B and PPP1R12C. 2 consecutive PDZ domains span residues 410-495 (HVTI…VTRK) and 532-617 (TVTL…IRRK).

As to quaternary structure, homotetramer. Pro-interleukin-16 interacts (via PDZ 2 domain) with PPP1R12A, PPP1R12B and PPP1R12C. Pro-interleukin-16 interacts with GRIN2A. Pro-interleukin-16 interacts with GABPB1. Pro-interleukin-16 interacts (via PDZ 3 domain) with HDAC3.

It is found in the secreted. Its subcellular location is the cytoplasm. It localises to the nucleus. Its function is as follows. Interleukin-16 stimulates a migratory response in CD4+ lymphocytes, monocytes, and eosinophils. Primes CD4+ T-cells for IL-2 and IL-15 responsiveness. Also induces T-lymphocyte expression of interleukin 2 receptor. Ligand for CD4. In terms of biological role, pro-interleukin-16 is involved in cell cycle progression in T-cells. Appears to be involved in transcriptional regulation of SKP2 and is probably part of a transcriptional repression complex on the core promoter of the SKP2 gene. May act as a scaffold for GABPB1 (the DNA-binding subunit the GABP transcription factor complex) and HDAC3 thus maintaining transcriptional repression and blocking cell cycle progression in resting T-cells. The polypeptide is Pro-interleukin-16 (IL16) (Macaca mulatta (Rhesus macaque)).